The sequence spans 142 residues: Ribonuclease VapC44 (142 aa).

The PINc domain maps to 4–126 (LLDVNVLLAL…GRFVTFDQSI (123 aa)). The Mg(2+) site is built by D6 and D105.

The protein belongs to the PINc/VapC protein family. Mg(2+) serves as cofactor.

Its function is as follows. Toxic component of a type II toxin-antitoxin (TA) system. An RNase. Its cognate antitoxin is VapB44. This Mycobacterium tuberculosis (strain CDC 1551 / Oshkosh) protein is Ribonuclease VapC44.